A 420-amino-acid polypeptide reads, in one-letter code: Uteroferrin-associated basic protein 2 (420 aa).

Positions 1-25 (MSHGKMPLVLSLVLILCGLFNSISC) are cleaved as a signal peptide. N-linked (GlcNAc...) asparagine glycosylation is found at Asn-225, Asn-271, and Asn-343.

The protein belongs to the serpin family. UTMP subfamily.

It localises to the secreted. The protein localises to the extracellular space. This chain is Uteroferrin-associated basic protein 2, found in Sus scrofa (Pig).